Here is a 346-residue protein sequence, read N- to C-terminus: Glycosyltransferase 1 domain-containing protein 1 (346 aa).

The first 16 residues, 1–16 (MRLLFLAVLRPHTGNA), serve as a signal peptide directing secretion.

Belongs to the glycosyltransferase group 1 family. Glycosyltransferase 4 subfamily.

The protein resides in the secreted. The chain is Glycosyltransferase 1 domain-containing protein 1 (GLT1D1) from Pongo abelii (Sumatran orangutan).